The chain runs to 473 residues: H(+)/Cl(-) exchange transporter ClcA (473 aa).

At 1-32 (MKTDTSTFLAQQIVRLRRRDQIRRLMQRDKTP) the chain is on the cytoplasmic side. Residues 33-69 (LAILFMAAVVGTLTGLVGVAFEKAVSWVQNMRIGALV) form a helical membrane-spanning segment. The Periplasmic segment spans residues 70–76 (QVADHAF). The helical transmembrane segment at 77–100 (LLWPLAFILSALLAMVGYFLVRKF) threads the bilayer. The short motif at 106-110 (GSGIP) is the Selectivity filter part_1 element. Residue Ser107 participates in chloride binding. The helical intramembrane region spans 109 to 116 (IPEIEGAL). The Cytoplasmic segment spans residues 117-123 (EELRPVR). Helical transmembrane passes span 124–141 (WWRV…TLGA) and 148–166 (EGPT…LDVF). The Selectivity filter part_2 signature appears at 146 to 150 (GREGP). Residues 167–176 (RMRSAEARHT) lie on the Cytoplasmic side of the membrane. Intramembrane regions (helical) lie at residues 177–189 (LLAT…LSAA) and 193–201 (PLAGILFII). Residues 202 to 214 (EEMRPQFRYNLIS) are Cytoplasmic-facing. Residues 215–232 (IKAVFTGVIMSSIVFRIF) form a helical membrane-spanning segment. Topologically, residues 233–252 (NGEAPIIEVGKLSDAPVNTL) are periplasmic. The chain crosses the membrane as a helical span at residues 253 to 281 (WLYLILGIIFGCVGPVFNSLVLRTQDMFQ). Residues 282-287 (RFHGGE) are Cytoplasmic-facing. A helical membrane pass occupies residues 288-309 (IKKWVLMGGAIGGLCGILGLIE). Residues 310–329 (PEAAGGGFNLIPIAAAGNFS) lie on the Periplasmic side of the membrane. 2 consecutive transmembrane segments (helical) span residues 330 to 349 (VGLL…LCFS) and 355 to 376 (GIFA…MAAA). The Selectivity filter part_3 motif lies at 355–359 (GIFAP). 2 residues coordinate chloride: Ile356 and Phe357. Residues 377–386 (VLFPQYHLEA) lie on the Periplasmic side of the membrane. Positions 387–401 (GTFAIAGMGALMAAS) form an intramembrane region, helical. An intramembrane region (note=Loop between two helices) is located at residues 402 to 404 (VRA). Positions 405–416 (PLTGIVLVLEMT) form an intramembrane region, helical. Positions 417-421 (DNYQL) form an intramembrane region, note=Loop between two helices. Residues 422-438 (ILPMIITCLGATLLAQF) form a helical membrane-spanning segment. At 439-473 (LGGKPLYSTILARTLAKQDAEQAAKNQNAPAGENT) the chain is on the cytoplasmic side. Tyr445 lines the chloride pocket.

This sequence belongs to the chloride channel (TC 2.A.49) family. ClcA subfamily. Homodimer.

The protein resides in the cell inner membrane. It catalyses the reaction 2 chloride(in) + H(+)(out) = 2 chloride(out) + H(+)(in). Proton-coupled chloride transporter. Functions as antiport system and exchanges two chloride ions for 1 proton. Probably acts as an electrical shunt for an outwardly-directed proton pump that is linked to amino acid decarboxylation, as part of the extreme acid resistance (XAR) response. This is H(+)/Cl(-) exchange transporter ClcA from Salmonella agona (strain SL483).